Reading from the N-terminus, the 283-residue chain is 4-diphosphocytidyl-2-C-methyl-D-erythritol kinase (283 aa).

Lys-13 is a catalytic residue. 96–106 (PMGGGIGGGSS) lines the ATP pocket. Asp-138 is an active-site residue.

It belongs to the GHMP kinase family. IspE subfamily.

It catalyses the reaction 4-CDP-2-C-methyl-D-erythritol + ATP = 4-CDP-2-C-methyl-D-erythritol 2-phosphate + ADP + H(+). Its pathway is isoprenoid biosynthesis; isopentenyl diphosphate biosynthesis via DXP pathway; isopentenyl diphosphate from 1-deoxy-D-xylulose 5-phosphate: step 3/6. In terms of biological role, catalyzes the phosphorylation of the position 2 hydroxy group of 4-diphosphocytidyl-2C-methyl-D-erythritol. The protein is 4-diphosphocytidyl-2-C-methyl-D-erythritol kinase of Pseudomonas fluorescens (strain SBW25).